The primary structure comprises 1574 residues: MSVTSWFLVSSSGTRHRLPRELIFVGRDECELMLQSRSVDKQHAVINYDQDRDEHWVKDLGSLNGTFVNDVRIPDQKYITLKLNDVIRFGYDSNMYVLERVQHRVPEEALKHEKYTSQLQVSVKVSAPKRGDALPDHTPYCESSQPRPEKGDRRHGAEAVAYRTPLYGQPSWWGEDDSGAPSEDRHQEEPYSERPKDLAQQNGELDSCRAPAEPPDYSFRREPSYFEIPTKETPQPPRLPEVPTQEVPTKDQEAGVGGTAPVVQSHASFTIEFDDCSPGKVKIKDHITKFSLRQRRAPSKETTPVETVSAETKVADWLVQNDPSLLRRDGPGDDRHSTKSDLPVHTRTLKGHKHEDGTQSDSEDPLAKTASVSGASAEASGEQVRLQRQIKRDPQELLHNQQAFVIEFFDGDTPRKKRSQSFTHTPPADPKADKRRGPGTSDRDRPGVSVRATGSSSGPQRASSLKREKTEERLGNTSPVPRASTRSFGSVGRRSRLAQDFMAQCMRDSSPATRPAPEKTPPVLPAPLTPRGASPVTPSTTPPPPTDPQLTKARKQEEDDSLSDAGTYTIETEAQDQEVEEARRMIDQVFGVFESPELSRVSSATFRPVIRGDKDESSDGGMAQRMALLQEFASRAPGMAPQMEQQSLLVPGSPGGQKWVSRWASLADSYSDAGLPEDGPGRRTGEPEGPLPVRTRRLLPQLPSGRADSPAGLEAARRNGPGPPELGSEPANCLIGQEDLDPDSLSDASGSDGGRGPEPGTERQEDLAWVRGRRSPRAPGELVPTSFFIGDQNGEATFPKKSFVGPGEVDGPGRVVQTSPSARDGLYVSSNGRMVIQLRSGRSPEPDPAPPKETLTFARQESFTKEPTSGPPAPGKLPHISSHPLLQDLAAARASRLDFHAQDTHLILKETETALAALEARLRSKSADECDGGSTPRPPEDSLSGDSDVDTASTISLLSGKNGPSPTTPQTPGPQKESPLSPPTVPDPGGATPGSARERMSERQHRPTPADLGPGDTSRRAAMRRGHGSRGSLDWPEEERGSGLAHLPSSNHETPEATLAGRQGPRRKPAAPPPSPAAREEQSRSSATAQKVQQALTRSNSLSTPRPTRASRLRRARLGDASDTEAVDGERGTAANPEPANRAAPEQAKKLTRLDILAMPRKRAGSFTGPSDSETAPARTGFSGRSAELYSTSRKPTIAEARAAAKKAAATAANTGPRQPFSRARPGSARYSSNTRRRQQGSDYTSTSEEEYGSHHSSPKHTRSHASTATQTPRGSSSTRARSQGPRDTDDDEEEPDPYGFIVQTAEIAEIARLSQTLVKDVAILAREIHDVAGDGDSLGSPGPTRSPSLGNVPNTPASTISAREELVQRIPEASLNFQKVPPGSMNSHNLDQNMNDSRDDALTNKTRPRNREEVIFDNLMLNPVSQLSHAIRENTEHLAEKMKVLFQNTGRAWEDLEARINSENEVPILKTSNKEISSILKELRRVQKQLEVINAIVDPSLNLDLLMGNRAPSGSGQPGLGKARPAAQSSTSPASVDTLLPALPLRSFPQRANCGPPGLPEPAFLPDAERFLI.

The 51-residue stretch at 23–73 (IFVGRDECELMLQSRSVDKQHAVINYDQDRDEHWVKDLGSLNGTFVNDVRI) folds into the FHA domain. Disordered regions lie at residues 121 to 258 (VSVK…GVGG), 316 to 395 (DWLV…RDPQ), and 409 to 578 (FDGD…QDQE). 3 stretches are compositionally biased toward basic and acidic residues: residues 147-157 (RPEKGDRRHGA), 182-197 (SEDR…RPKD), and 325-344 (LLRR…DLPV). At Ser360 the chain carries Phosphoserine. Over residues 370–382 (ASVSGASAEASGE) the composition is skewed to low complexity. A Phosphoserine modification is found at Ser421. Basic and acidic residues predominate over residues 430-446 (PKADKRRGPGTSDRDRP). Positions 452 to 463 (ATGSSSGPQRAS) are enriched in polar residues. The span at 465-474 (LKREKTEERL) shows a compositional bias: basic and acidic residues. Positions 475 to 488 (GNTSPVPRASTRSF) are enriched in polar residues. A phosphoserine mark is found at Ser478 and Ser490. Pro residues predominate over residues 518–528 (EKTPPVLPAPL). The residue at position 534 (Ser534) is a Phosphoserine. Residues Thr540 and Thr541 each carry the phosphothreonine modification. Phosphoserine is present on residues Ser595, Ser617, Ser653, Ser709, Ser744, Ser746, Ser749, Ser751, Ser819, and Ser843. 6 disordered regions span residues 637 to 826 (PGMA…RDGL), 839 to 882 (RSGR…HISS), 924 to 1300 (SKSA…DPYG), 1333 to 1358 (AGDG…NTPA), 1377 to 1407 (NFQK…TNKT), and 1510 to 1535 (NRAP…TSPA). Residues 857–867 (FARQESFTKEP) are compositionally biased toward polar residues. Ser947 bears the Phosphoserine mark. A compositionally biased stretch (polar residues) spans 950 to 959 (DTASTISLLS). Phosphoserine occurs at positions 965 and 981. Residues 996–1005 (ARERMSERQH) are compositionally biased toward basic and acidic residues. Polar residues predominate over residues 1084 to 1102 (RSSATAQKVQQALTRSNSL). Ser1122 carries the post-translational modification Phosphoserine. Low complexity predominate over residues 1134–1146 (AANPEPANRAAPE). 2 positions are modified to phosphoserine: Ser1166 and Ser1186. Low complexity predominate over residues 1199–1213 (AEARAAAKKAAATAA). The span at 1265–1282 (HASTATQTPRGSSSTRAR) shows a compositional bias: polar residues. At Thr1289 the chain carries Phosphothreonine. A Phosphoserine modification is found at Ser1341. 2 stretches are compositionally biased toward polar residues: residues 1344–1358 (PTRS…NTPA) and 1385–1396 (SMNSHNLDQNMN). Thr1345 carries the phosphothreonine modification. Ser1347 carries the post-translational modification Phosphoserine. Ser1530 and Ser1533 each carry phosphoserine.

Belongs to the CEP170 family.

It localises to the cytoplasm. The protein resides in the cytoskeleton. In terms of biological role, plays a role in microtubule organization. In Mus musculus (Mouse), this protein is Centrosomal protein of 170 kDa protein B (Cep170b).